The primary structure comprises 117 residues: DNA-directed RNA polymerase II subunit RPB11 (117 aa).

Methionine 1 carries the N-acetylmethionine modification.

The protein belongs to the archaeal Rpo11/eukaryotic RPB11/RPC19 RNA polymerase subunit family. Component of the RNA polymerase II (Pol II) core complex consisting of 12 subunits: a ten-subunit catalytic core composed of POLR2A/RPB1, POLR2B/RPB2, POLR2C/RPB3, POLR2I/RPB9, POLR2J/RPB11, POLR2E/RPABC1, POLR2F/RPABC2, POLR2H/RPABC3, POLR2K/RPABC4 and POLR2L/RPABC5 and a mobile stalk composed of two subunits POLR2D/RPB4 and POLR2G/RPB7, protruding from the core and functioning primarily in transcription initiation. Part of Pol II(G) complex, in which Pol II core associates with an additional subunit POLR2M; unlike conventional Pol II, Pol II(G) functions as a transcriptional repressor. Part of TBP-based Pol II pre-initiation complex (PIC), in which Pol II core assembles with general transcription factors and other specific initiation factors including GTF2E1, GTF2E2, GTF2F1, GTF2F2, TCEA1, ERCC2, ERCC3, GTF2H2, GTF2H3, GTF2H4, GTF2H5, GTF2A1, GTF2A2, GTF2B and TBP; this large multi-subunit PIC complex mediates DNA unwinding and targets Pol II core to the transcription start site where the first phosphodiester bond forms. Interacts with AATF. Interacts with PTPN6; this interaction promotes the recruitment of RNA pol II to the PCK1 promoter.

The protein localises to the nucleus. In terms of biological role, core component of RNA polymerase II (Pol II), a DNA-dependent RNA polymerase which synthesizes mRNA precursors and many functional non-coding RNAs using the four ribonucleoside triphosphates as substrates. The polypeptide is DNA-directed RNA polymerase II subunit RPB11 (Polr2j) (Mus musculus (Mouse)).